Consider the following 349-residue polypeptide: Isopentenyl-diphosphate delta-isomerase (349 aa).

5–6 (RK) lines the substrate pocket. FMN-binding positions include Ser62, 63–65 (AIT), Ser93, and Asn122. Residue 93–95 (SQR) coordinates substrate. Gln151 contacts substrate. Glu152 contacts Mg(2+). Residues Lys183, Thr213, 259–261 (GIR), and 280–281 (AL) contribute to the FMN site.

This sequence belongs to the IPP isomerase type 2 family. As to quaternary structure, homooctamer. Dimer of tetramers. The cofactor is FMN. Requires NADPH as cofactor. Mg(2+) serves as cofactor.

It is found in the cytoplasm. It catalyses the reaction isopentenyl diphosphate = dimethylallyl diphosphate. Involved in the biosynthesis of isoprenoids. Catalyzes the 1,3-allylic rearrangement of the homoallylic substrate isopentenyl (IPP) to its allylic isomer, dimethylallyl diphosphate (DMAPP). This chain is Isopentenyl-diphosphate delta-isomerase, found in Methanothermobacter thermautotrophicus (strain ATCC 29096 / DSM 1053 / JCM 10044 / NBRC 100330 / Delta H) (Methanobacterium thermoautotrophicum).